We begin with the raw amino-acid sequence, 152 residues long: Ribosome maturation factor RimP (152 aa).

It belongs to the RimP family.

It localises to the cytoplasm. Required for maturation of 30S ribosomal subunits. The polypeptide is Ribosome maturation factor RimP (Clostridium beijerinckii (strain ATCC 51743 / NCIMB 8052) (Clostridium acetobutylicum)).